Reading from the N-terminus, the 63-residue chain is Large ribosomal subunit protein uL29 (63 aa).

This sequence belongs to the universal ribosomal protein uL29 family.

In Bdellovibrio bacteriovorus (strain ATCC 15356 / DSM 50701 / NCIMB 9529 / HD100), this protein is Large ribosomal subunit protein uL29.